The sequence spans 74 residues: Small ribosomal subunit protein bS18 (74 aa).

The protein belongs to the bacterial ribosomal protein bS18 family. In terms of assembly, part of the 30S ribosomal subunit. Forms a tight heterodimer with protein bS6.

Binds as a heterodimer with protein bS6 to the central domain of the 16S rRNA, where it helps stabilize the platform of the 30S subunit. The polypeptide is Small ribosomal subunit protein bS18 (Zymomonas mobilis subsp. mobilis (strain ATCC 31821 / ZM4 / CP4)).